Reading from the N-terminus, the 366-residue chain is Chorismate synthase (366 aa).

NADP(+) is bound by residues arginine 48 and arginine 54. Residues 129–131, 241–242, glycine 290, 305–309, and arginine 331 each bind FMN; these read RSS, NA, and KPTSS.

This sequence belongs to the chorismate synthase family. In terms of assembly, homotetramer. It depends on FMNH2 as a cofactor.

The catalysed reaction is 5-O-(1-carboxyvinyl)-3-phosphoshikimate = chorismate + phosphate. Its pathway is metabolic intermediate biosynthesis; chorismate biosynthesis; chorismate from D-erythrose 4-phosphate and phosphoenolpyruvate: step 7/7. Catalyzes the anti-1,4-elimination of the C-3 phosphate and the C-6 proR hydrogen from 5-enolpyruvylshikimate-3-phosphate (EPSP) to yield chorismate, which is the branch point compound that serves as the starting substrate for the three terminal pathways of aromatic amino acid biosynthesis. This reaction introduces a second double bond into the aromatic ring system. The sequence is that of Chorismate synthase from Nitrobacter hamburgensis (strain DSM 10229 / NCIMB 13809 / X14).